A 1379-amino-acid polypeptide reads, in one-letter code: DNA-directed RNA polymerase subunit beta (1379 aa).

The protein belongs to the RNA polymerase beta chain family. In plastids the minimal PEP RNA polymerase catalytic core is composed of four subunits: alpha, beta, beta', and beta''. When a (nuclear-encoded) sigma factor is associated with the core the holoenzyme is formed, which can initiate transcription.

The protein localises to the plastid. The protein resides in the chloroplast. The enzyme catalyses RNA(n) + a ribonucleoside 5'-triphosphate = RNA(n+1) + diphosphate. Its function is as follows. DNA-dependent RNA polymerase catalyzes the transcription of DNA into RNA using the four ribonucleoside triphosphates as substrates. This chain is DNA-directed RNA polymerase subunit beta, found in Trieres chinensis (Marine centric diatom).